We begin with the raw amino-acid sequence, 505 residues long: Maturase K (505 aa).

This sequence belongs to the intron maturase 2 family. MatK subfamily.

It is found in the plastid. Its subcellular location is the chloroplast. Its function is as follows. Usually encoded in the trnK tRNA gene intron. Probably assists in splicing its own and other chloroplast group II introns. The polypeptide is Maturase K (Beta vulgaris (Sugar beet)).